Consider the following 359-residue polypeptide: Patr class I histocompatibility antigen, B-1 alpha chain (359 aa).

Residues 1-20 (APRTVLLLLSAALALTETWA) form the signal peptide. The interval 21 to 110 (GSHSMRYFYT…ALRYYNQSEA (90 aa)) is alpha-1. Over 21–305 (GSHSMRYFYT…PSSQSTIPIV (285 aa)) the chain is Extracellular. The N-linked (GlcNAc...) asparagine glycan is linked to N106. The tract at residues 111 to 202 (GSHTWQTMYG…ENGKETLQRA (92 aa)) is alpha-2. 2 disulfide bridges follow: C121–C184 and C223–C279. The tract at residues 203-294 (DPPKTHVTHH…GLPKPLTLRW (92 aa)) is alpha-3. Residues 205–291 (PKTHVTHHPI…QHEGLPKPLT (87 aa)) enclose the Ig-like C1-type domain. The connecting peptide stretch occupies residues 295 to 305 (EPSSQSTIPIV). A helical membrane pass occupies residues 306 to 329 (GIVAGLAVLVVTVAVVAVVAAVMC). Residues 330–359 (RRKSSGGKGGSYSQAASSDSAQGSDVSLTA) are Cytoplasmic-facing. The segment at 332-359 (KSSGGKGGSYSQAASSDSAQGSDVSLTA) is disordered. The segment covering 340 to 359 (SYSQAASSDSAQGSDVSLTA) has biased composition (low complexity). S353 and S356 each carry phosphoserine.

The protein belongs to the MHC class I family. Heterodimer of an alpha chain and a beta chain (beta-2-microglobulin).

The protein resides in the membrane. Involved in the presentation of foreign antigens to the immune system. The chain is Patr class I histocompatibility antigen, B-1 alpha chain from Pan troglodytes (Chimpanzee).